The primary structure comprises 312 residues: MAIYLDFENHIKEIQNEIELALIRGDEDAKEILEKRLDKEVKSIYSNLTDFQKLQLARHPDRPYAMDYIDLILKDKYEVFGDRHYNDDKAIVCFIGKIDNVPVVVIGEEKGRGTKNKLLRNFGMPNPCGYRKALKMAKFAEKFNLPILMLVDTAGAYPGIGAEERGQSEAIAKNLQEFASLKVPTISIIIGEGGSGGALAIAVADKLAMMEYSIFSVISPEGCAAILWDDPSKTEVAIKAMKITPRDLKEAGLIDDIILEPSKGAHRDKFSAANTIKEYFLDALRTIQQDPHFLDNRYQKLMSLGSFVESMN.

Residues 36–286 (RLDKEVKSIY…KEYFLDALRT (251 aa)) enclose the CoA carboxyltransferase C-terminal domain.

Belongs to the AccA family. Acetyl-CoA carboxylase is a heterohexamer composed of biotin carboxyl carrier protein (AccB), biotin carboxylase (AccC) and two subunits each of ACCase subunit alpha (AccA) and ACCase subunit beta (AccD).

The protein resides in the cytoplasm. The catalysed reaction is N(6)-carboxybiotinyl-L-lysyl-[protein] + acetyl-CoA = N(6)-biotinyl-L-lysyl-[protein] + malonyl-CoA. Its pathway is lipid metabolism; malonyl-CoA biosynthesis; malonyl-CoA from acetyl-CoA: step 1/1. In terms of biological role, component of the acetyl coenzyme A carboxylase (ACC) complex. First, biotin carboxylase catalyzes the carboxylation of biotin on its carrier protein (BCCP) and then the CO(2) group is transferred by the carboxyltransferase to acetyl-CoA to form malonyl-CoA. In Helicobacter pylori (strain J99 / ATCC 700824) (Campylobacter pylori J99), this protein is Acetyl-coenzyme A carboxylase carboxyl transferase subunit alpha.